Reading from the N-terminus, the 356-residue chain is Sensor protein BasS (356 aa).

The Cytoplasmic segment spans residues 1 to 13; the sequence is MRFQRRAMTLRQR. A helical membrane pass occupies residues 14 to 34; sequence LMLTIGLILLVFQLISTFWLW. Residues 35-64 lie on the Periplasmic side of the membrane; that stretch reads HESTEQIQLFEQALRDNRNNDRHIMHEIRE. Residues 65–88 traverse the membrane as a helical segment; it reads AVASLIVPGVFMVSLTLLICYQAV. Residues 89-141 form the HAMP domain; the sequence is RRITRPLAELQKELEARTADNLAPIAIHSSTLEIESVVSAINQLVTRLTTTLD. The Cytoplasmic segment spans residues 89 to 356; it reads RRITRPLAEL…TRAWVLLKKA (268 aa). Positions 149–356 constitute a Histidine kinase domain; it reads DVAHELRTPL…TRAWVLLKKA (208 aa). Phosphohistidine; by autocatalysis is present on His-152.

Autophosphorylated.

The protein localises to the cell inner membrane. It carries out the reaction ATP + protein L-histidine = ADP + protein N-phospho-L-histidine.. Member of the two-component regulatory system BasS/BasR. Autophosphorylates and activates BasR by phosphorylation. Plays a role in the adaptation of the organism to the host environment, in particular to neutrophils, and therefore it plays a role in virulence as well. In Salmonella typhimurium (strain LT2 / SGSC1412 / ATCC 700720), this protein is Sensor protein BasS (basS).